The primary structure comprises 197 residues: Recombination protein RecR (197 aa).

A C4-type zinc finger spans residues 56-71 (CERCNTFTETEICQRC). Positions 79 to 174 (SLLCVVEMPA…RVSRLSRGVP (96 aa)) constitute a Toprim domain.

Belongs to the RecR family.

Functionally, may play a role in DNA repair. It seems to be involved in an RecBC-independent recombinational process of DNA repair. It may act with RecF and RecO. This is Recombination protein RecR from Aromatoleum aromaticum (strain DSM 19018 / LMG 30748 / EbN1) (Azoarcus sp. (strain EbN1)).